Reading from the N-terminus, the 595-residue chain is Metacaspase-1 (595 aa).

Catalysis depends on residues H411 and C466.

Belongs to the peptidase C14B family. Monomer.

With respect to regulation, activated by Ca(2+). In terms of biological role, cysteine protease that cleaves specifically after arginine or lysine residues. This Plasmodium berghei (strain Anka) protein is Metacaspase-1.